Here is a 251-residue protein sequence, read N- to C-terminus: 5'-nucleotidase SurE (251 aa).

Residues aspartate 8, aspartate 9, serine 39, and asparagine 90 each contribute to the a divalent metal cation site.

Belongs to the SurE nucleotidase family. A divalent metal cation is required as a cofactor.

The protein resides in the cytoplasm. The enzyme catalyses a ribonucleoside 5'-phosphate + H2O = a ribonucleoside + phosphate. Nucleotidase that shows phosphatase activity on nucleoside 5'-monophosphates. The sequence is that of 5'-nucleotidase SurE from Legionella pneumophila subsp. pneumophila (strain Philadelphia 1 / ATCC 33152 / DSM 7513).